The sequence spans 407 residues: Protein-glutamine gamma-glutamyltransferase (407 aa).

An N-terminal signal peptide occupies residues 1 to 31 (MRIRRRALVFATMSAVLCTAGFMPSAGEAAA). Residues 32 to 76 (DNGAGEETKSYAETYRLTADDVANINALNESAPAASSAGPSFRAP) constitute a propeptide that is removed on maturation. The span at 62 to 72 (SAPAASSAGPS) shows a compositional bias: low complexity. Residues 62–98 (SAPAASSAGPSFRAPDSDDRVTPPAEPLDRMPDPYRP) are disordered. The span at 76–94 (PDSDDRVTPPAEPLDRMPD) shows a compositional bias: basic and acidic residues. Residue Cys-140 is part of the active site. The interval 282 to 322 (QDRSSSADKRKYGDPDAFRPAPGTGLVDMSRDRNIPRSPTS) is disordered. Residues 286 to 298 (SSADKRKYGDPDA) show a composition bias toward basic and acidic residues. Catalysis depends on residues Asp-331 and His-350.

This sequence belongs to the bacterial TGase family.

The enzyme catalyses L-glutaminyl-[protein] + L-lysyl-[protein] = [protein]-L-lysyl-N(6)-5-L-glutamyl-[protein] + NH4(+). In terms of biological role, catalyzes the cross-linking of proteins and the conjugation of polyamines to proteins. This chain is Protein-glutamine gamma-glutamyltransferase, found in Streptomyces mobaraensis (Streptoverticillium mobaraense).